Consider the following 370-residue polypeptide: Cobalt-precorrin-5B C(1)-methyltransferase (370 aa).

This sequence belongs to the CbiD family.

The catalysed reaction is Co-precorrin-5B + S-adenosyl-L-methionine = Co-precorrin-6A + S-adenosyl-L-homocysteine. Its pathway is cofactor biosynthesis; adenosylcobalamin biosynthesis; cob(II)yrinate a,c-diamide from sirohydrochlorin (anaerobic route): step 6/10. Functionally, catalyzes the methylation of C-1 in cobalt-precorrin-5B to form cobalt-precorrin-6A. The protein is Cobalt-precorrin-5B C(1)-methyltransferase of Pseudomonas syringae pv. syringae (strain B728a).